A 291-amino-acid polypeptide reads, in one-letter code: Segregation and condensation protein B (291 aa).

It belongs to the ScpB family. Homodimer. Homodimerization may be required to stabilize the binding of ScpA to the Smc head domains. Component of a cohesin-like complex composed of ScpA, ScpB and the Smc homodimer, in which ScpA and ScpB bind to the head domain of Smc. The presence of the three proteins is required for the association of the complex with DNA.

It is found in the cytoplasm. Participates in chromosomal partition during cell division. May act via the formation of a condensin-like complex containing Smc and ScpA that pull DNA away from mid-cell into both cell halves. This chain is Segregation and condensation protein B, found in Mycoplasmoides gallisepticum (strain R(low / passage 15 / clone 2)) (Mycoplasma gallisepticum).